The primary structure comprises 1053 residues: Probable dihydropyrimidine dehydrogenase [NADP(+)] (1053 aa).

The region spanning 84–115 (ERGALKEAMRCLKCADAPCQKSCPTQLDIKSF) is the 4Fe-4S ferredoxin-type 1 domain. Residues C94, C97, C102, C106, C145, C151, C155, and Q171 each contribute to the [4Fe-4S] cluster site. Residues 207–211 (GCGPA), 231–239 (EKRAYIGGL), R248, and L274 contribute to the FAD site. NADP(+)-binding positions include 354 to 357 (AGDT), 378 to 379 (RK), R385, 451 to 453 (AFG), and 495 to 501 (DVAGVAE). An FAD-binding site is contributed by 494 to 503 (GDVAGVAETT). Residues S574 and 598–599 (KT) contribute to the FMN site. Residues N633 and 692–694 (NLS) contribute to the substrate site. C695 acts as the Proton acceptor in catalysis. K733 serves as a coordination point for FMN. Residue 760 to 761 (NT) participates in substrate binding. FMN-binding positions include G791, 817–819 (TGG), and 840–841 (CS). 4Fe-4S ferredoxin-type domains are found at residues 949–981 (EVAI…FDAV) and 983–1013 (HQPH…MVPR). The [4Fe-4S] cluster site is built by C958, C961, C964, C968, C992, C995, C998, and C1002.

This sequence belongs to the dihydropyrimidine dehydrogenase family. It depends on [4Fe-4S] cluster as a cofactor. The cofactor is FAD. Requires FMN as cofactor.

It carries out the reaction 5,6-dihydrouracil + NADP(+) = uracil + NADPH + H(+). It participates in amino-acid biosynthesis; beta-alanine biosynthesis. Its function is as follows. Involved in pyrimidine base degradation. Catalyzes the reduction of uracil and thymine. Also involved the degradation of the chemotherapeutic drug 5-fluorouracil. This Caenorhabditis briggsae protein is Probable dihydropyrimidine dehydrogenase [NADP(+)].